The primary structure comprises 320 residues: Adenosine receptor A3 (320 aa).

Residues 1–16 are Extracellular-facing; it reads MKANNTTTSALWLQIT. 2 N-linked (GlcNAc...) asparagine glycosylation sites follow: Asn4 and Asn5. Residues 17-39 form a helical membrane-spanning segment; the sequence is YITMEAAIGLCAVVGNMLVIWVV. At 40 to 50 the chain is on the cytoplasmic side; it reads KLNRTLRTTTF. The helical transmembrane segment at 51–74 threads the bilayer; sequence YFIVSLALADIAVGVLVIPLAIAV. Residues 75-86 are Extracellular-facing; it reads SLEVQMHFYACL. Cys85 and Cys168 are oxidised to a cystine. The chain crosses the membrane as a helical span at residues 87 to 108; the sequence is FMSCVLLVFTHASIMSLLAIAV. Residues 109-128 are Cytoplasmic-facing; the sequence is DRYLRVKLTVRYRTVTTQRR. A helical transmembrane segment spans residues 129 to 150; that stretch reads IWLFLGLCWLVSFLVGLTPMFG. The Extracellular segment spans residues 151-179; sequence WNRKVTLELSQNSSTLSCHFRSVVGLDYM. A helical transmembrane segment spans residues 180–200; that stretch reads VFFSFITWILIPLVVMCIIYL. Topologically, residues 201–233 are cytoplasmic; that stretch reads DIFYIIRNKLSQNLTGFRETRAFYGREFKTAKS. The helical transmembrane segment at 234 to 257 threads the bilayer; the sequence is LFLVLFLFALCWLPLSIINFVSYF. At 258–263 the chain is on the extracellular side; the sequence is NVKIPE. Residues 264–286 traverse the membrane as a helical segment; it reads IAMCLGILLSHANSMMNPIVYAC. Residues 287-320 are Cytoplasmic-facing; that stretch reads KIKKFKETYFVILRACRLCQTSDSLDSNLEQTTE. Cys305 carries S-palmitoyl cysteine lipidation. Residues Thr307, Thr318, and Thr319 each carry the phosphothreonine modification.

It belongs to the G-protein coupled receptor 1 family. Phosphorylation on Thr-318 and Thr-319 may be crucial for rapid desensitization. Phosphorylation on Thr-318 may be necessary for phosphorylation on Thr-319 to occur. In terms of tissue distribution, testis, particularly in spermatocytes and spermatids but not in spermatogonia. Low levels in the brain.

It is found in the cell membrane. Functionally, receptor for adenosine. The activity of this receptor is mediated by G proteins which inhibits adenylyl cyclase. May play a role during reproduction. This chain is Adenosine receptor A3 (Adora3), found in Rattus norvegicus (Rat).